We begin with the raw amino-acid sequence, 60 residues long: Large ribosomal subunit protein uL30 (60 aa).

The protein belongs to the universal ribosomal protein uL30 family. As to quaternary structure, part of the 50S ribosomal subunit.

This Shewanella woodyi (strain ATCC 51908 / MS32) protein is Large ribosomal subunit protein uL30.